Consider the following 262-residue polypeptide: Short-chain Z-isoprenyl diphosphate synthase (262 aa).

The active site involves aspartate 40. Residue aspartate 40 participates in Mg(2+) binding. Substrate is bound by residues 41–44, tryptophan 45, and 86–88; these read GNRR and STE. Catalysis depends on asparagine 89, which acts as the Proton acceptor. Substrate contacts are provided by residues arginine 92, arginine 211, and 217–219; that span reads RLS. Glutamate 230 is a binding site for Mg(2+).

It belongs to the UPP synthase family. Z-FPP synthase subfamily. The cofactor is Mg(2+).

It carries out the reaction isopentenyl diphosphate + (2E)-geranyl diphosphate = (2Z,6E)-farnesyl diphosphate + diphosphate. It functions in the pathway phospholipid metabolism; decaprenyl phosphate biosynthesis. Functionally, generates Z-farnesyl diphosphate (Z-FPP) from isopentenyl pyrophosphate (IPP). Z-FPP is the precursor of decaprenyl diphosphate, which has a central role in the biosynthesis of the mycobacterial cell wall. This is Short-chain Z-isoprenyl diphosphate synthase from Mycobacterium bovis (strain ATCC BAA-935 / AF2122/97).